Here is a 242-residue protein sequence, read N- to C-terminus: Biosynthetic peptidoglycan transglycosylase (242 aa).

Residues isoleucine 19–valine 39 traverse the membrane as a helical segment.

Belongs to the glycosyltransferase 51 family.

The protein localises to the cell inner membrane. The catalysed reaction is [GlcNAc-(1-&gt;4)-Mur2Ac(oyl-L-Ala-gamma-D-Glu-L-Lys-D-Ala-D-Ala)](n)-di-trans,octa-cis-undecaprenyl diphosphate + beta-D-GlcNAc-(1-&gt;4)-Mur2Ac(oyl-L-Ala-gamma-D-Glu-L-Lys-D-Ala-D-Ala)-di-trans,octa-cis-undecaprenyl diphosphate = [GlcNAc-(1-&gt;4)-Mur2Ac(oyl-L-Ala-gamma-D-Glu-L-Lys-D-Ala-D-Ala)](n+1)-di-trans,octa-cis-undecaprenyl diphosphate + di-trans,octa-cis-undecaprenyl diphosphate + H(+). It participates in cell wall biogenesis; peptidoglycan biosynthesis. Peptidoglycan polymerase that catalyzes glycan chain elongation from lipid-linked precursors. The polypeptide is Biosynthetic peptidoglycan transglycosylase (Salmonella choleraesuis (strain SC-B67)).